A 992-amino-acid chain; its full sequence is Disks large-associated protein 4 (992 aa).

Residues 1-20 (MKGLGDSRPRHLSDSLDPPH) are compositionally biased toward basic and acidic residues. 3 disordered regions span residues 1–30 (MKGLGDSRPRHLSDSLDPPHEPLFAGTDRN), 47–66 (PGQNTLPGDGLFPLNNQLPP), and 157–206 (LEGT…GWWS). Over residues 162-171 (GKVGGNGSKK) the composition is skewed to gly residues. Over residues 172 to 194 (GGMEDGKGRRAKSKERAKAGEPK) the composition is skewed to basic and acidic residues. A phosphoserine mark is found at serine 206 and serine 207. Residue arginine 291 is modified to Omega-N-methylarginine. Positions 342–396 (STTLLSPRETDAAAEGPIPCRRMRSGSYIKAMGDEDSDESGGSPKPSPKTAARRQ) are disordered. Serine 378, serine 381, serine 388, serine 405, serine 415, and serine 421 each carry phosphoserine. 3 disordered regions span residues 527 to 751 (SVSL…GPRQ), 763 to 798 (SYGDNSDPALEASSLPPPDPWLETSSSSPAEPAQPG), and 915 to 992 (TPEK…QTRL). Over residues 528 to 554 (VSLQSLSPPPSTGSLSNSRTLPSSSCL) the composition is skewed to low complexity. Polar residues predominate over residues 576–591 (VTVQSSTESAQDTYLD). Phosphoserine is present on residues serine 580, serine 581, serine 609, serine 611, serine 665, and serine 744. The segment covering 600–620 (TSQSGLSNSSDSLDSSTRPPS) has biased composition (low complexity). At threonine 915 the chain carries Phosphothreonine. Composition is skewed to basic and acidic residues over residues 915–925 (TPEKRKEEKKP) and 940–958 (VSRDKASDASDKQRQEARK). Residues 969 to 978 (VRQNSATESA) are compositionally biased toward polar residues. Serine 973 is subject to Phosphoserine.

Belongs to the SAPAP family. In terms of assembly, interacts with DLG1 and DLG4/PSD-95.

It is found in the membrane. Functionally, may play a role in the molecular organization of synapses and neuronal cell signaling. Could be an adapter protein linking ion channel to the subsynaptic cytoskeleton. May induce enrichment of PSD-95/SAP90 at the plasma membrane. This chain is Disks large-associated protein 4 (DLGAP4), found in Homo sapiens (Human).